Here is a 313-residue protein sequence, read N- to C-terminus: MHDTFKHTTVLLDEAVNGLNIKSDGIYIDGTFGRGGHSRLILSQLGEHGRLYAIDRDPQAIAAAAEITDPRFTIIHGPFSALAEYAEERGLKGKIDGILLDLGVSSPQLDDAERGFSFMRDGPLDMRMDPTRGQSAAEWLLKAEESDIAFVLKTFGEERFAKRIARAIVERNREQPMTRTKELADVIYAATPVKDKFKHPATRSFQAIRIWVNSELEEIEQALKGALSALTAGGRLSIISFHSLEDRIVKRFMREQSRGPQIPHGLPMTEAQLSSLGGRQLKALGKMMPGESEVADNPRARSSVLRIAERTAS.

Residues 35 to 37, aspartate 55, phenylalanine 79, aspartate 101, and glutamine 108 contribute to the S-adenosyl-L-methionine site; that span reads GGH.

Belongs to the methyltransferase superfamily. RsmH family.

The protein resides in the cytoplasm. The enzyme catalyses cytidine(1402) in 16S rRNA + S-adenosyl-L-methionine = N(4)-methylcytidine(1402) in 16S rRNA + S-adenosyl-L-homocysteine + H(+). Its function is as follows. Specifically methylates the N4 position of cytidine in position 1402 (C1402) of 16S rRNA. The protein is Ribosomal RNA small subunit methyltransferase H of Erwinia tasmaniensis (strain DSM 17950 / CFBP 7177 / CIP 109463 / NCPPB 4357 / Et1/99).